Consider the following 451-residue polypeptide: Secreted RxLR effector protein 70 (451 aa).

An N-terminal signal peptide occupies residues Met-1 to Ser-17. Residues Arg-48–Arg-65 carry the RxLR-dEER motif. Residues Asp-303–Phe-336 form a disordered region. Residues Pro-305–Thr-323 show a composition bias toward polar residues.

It belongs to the RxLR effector family.

The protein resides in the secreted. It is found in the host nucleus. Functionally, secreted effector that completely suppresses the host cell death induced by cell death-inducing proteins. In Plasmopara viticola (Downy mildew of grapevine), this protein is Secreted RxLR effector protein 70.